Consider the following 808-residue polypeptide: uncharacterized protein (808 aa).

35–42 (GPNNVGKT) is a binding site for ATP.

This is an uncharacterized protein from Methanocaldococcus jannaschii (strain ATCC 43067 / DSM 2661 / JAL-1 / JCM 10045 / NBRC 100440) (Methanococcus jannaschii).